We begin with the raw amino-acid sequence, 489 residues long: Cobyric acid synthase (489 aa).

One can recognise a GATase cobBQ-type domain in the interval 254 to 442 (ARVIAVPVLP…VHGLFADDRQ (189 aa)). C336 (nucleophile) is an active-site residue. H434 is an active-site residue.

Belongs to the CobB/CobQ family. CobQ subfamily.

It participates in cofactor biosynthesis; adenosylcobalamin biosynthesis. Its function is as follows. Catalyzes amidations at positions B, D, E, and G on adenosylcobyrinic A,C-diamide. NH(2) groups are provided by glutamine, and one molecule of ATP is hydrogenolyzed for each amidation. The chain is Cobyric acid synthase from Methylobacterium nodulans (strain LMG 21967 / CNCM I-2342 / ORS 2060).